A 361-amino-acid chain; its full sequence is Phosphoserine aminotransferase (361 aa).

Residue R42 participates in L-glutamate binding. Pyridoxal 5'-phosphate contacts are provided by residues 76-77 (GR), W102, T154, D173, and Q196. K197 is modified (N6-(pyridoxal phosphate)lysine). 238 to 239 (NT) is a binding site for pyridoxal 5'-phosphate.

Belongs to the class-V pyridoxal-phosphate-dependent aminotransferase family. SerC subfamily. As to quaternary structure, homodimer. Pyridoxal 5'-phosphate serves as cofactor.

It localises to the cytoplasm. The catalysed reaction is O-phospho-L-serine + 2-oxoglutarate = 3-phosphooxypyruvate + L-glutamate. It catalyses the reaction 4-(phosphooxy)-L-threonine + 2-oxoglutarate = (R)-3-hydroxy-2-oxo-4-phosphooxybutanoate + L-glutamate. It functions in the pathway amino-acid biosynthesis; L-serine biosynthesis; L-serine from 3-phospho-D-glycerate: step 2/3. Its pathway is cofactor biosynthesis; pyridoxine 5'-phosphate biosynthesis; pyridoxine 5'-phosphate from D-erythrose 4-phosphate: step 3/5. Functionally, catalyzes the reversible conversion of 3-phosphohydroxypyruvate to phosphoserine and of 3-hydroxy-2-oxo-4-phosphonooxybutanoate to phosphohydroxythreonine. The polypeptide is Phosphoserine aminotransferase (Idiomarina loihiensis (strain ATCC BAA-735 / DSM 15497 / L2-TR)).